Reading from the N-terminus, the 617-residue chain is Dihydroxy-acid dehydratase (617 aa).

Aspartate 81 lines the Mg(2+) pocket. Cysteine 122 contributes to the [2Fe-2S] cluster binding site. Mg(2+) contacts are provided by aspartate 123 and lysine 124. Lysine 124 bears the N6-carboxylysine mark. Cysteine 195 is a [2Fe-2S] cluster binding site. Glutamate 491 lines the Mg(2+) pocket. Serine 517 serves as the catalytic Proton acceptor.

This sequence belongs to the IlvD/Edd family. As to quaternary structure, homodimer. [2Fe-2S] cluster is required as a cofactor. Mg(2+) serves as cofactor.

The catalysed reaction is (2R)-2,3-dihydroxy-3-methylbutanoate = 3-methyl-2-oxobutanoate + H2O. It catalyses the reaction (2R,3R)-2,3-dihydroxy-3-methylpentanoate = (S)-3-methyl-2-oxopentanoate + H2O. It functions in the pathway amino-acid biosynthesis; L-isoleucine biosynthesis; L-isoleucine from 2-oxobutanoate: step 3/4. It participates in amino-acid biosynthesis; L-valine biosynthesis; L-valine from pyruvate: step 3/4. In terms of biological role, functions in the biosynthesis of branched-chain amino acids. Catalyzes the dehydration of (2R,3R)-2,3-dihydroxy-3-methylpentanoate (2,3-dihydroxy-3-methylvalerate) into 2-oxo-3-methylpentanoate (2-oxo-3-methylvalerate) and of (2R)-2,3-dihydroxy-3-methylbutanoate (2,3-dihydroxyisovalerate) into 2-oxo-3-methylbutanoate (2-oxoisovalerate), the penultimate precursor to L-isoleucine and L-valine, respectively. This Caulobacter vibrioides (strain ATCC 19089 / CIP 103742 / CB 15) (Caulobacter crescentus) protein is Dihydroxy-acid dehydratase.